The following is a 262-amino-acid chain: Imidazole glycerol phosphate synthase subunit HisF (262 aa).

Catalysis depends on residues Asp11 and Asp130.

This sequence belongs to the HisA/HisF family. Heterodimer of HisH and HisF.

The protein resides in the cytoplasm. The catalysed reaction is 5-[(5-phospho-1-deoxy-D-ribulos-1-ylimino)methylamino]-1-(5-phospho-beta-D-ribosyl)imidazole-4-carboxamide + L-glutamine = D-erythro-1-(imidazol-4-yl)glycerol 3-phosphate + 5-amino-1-(5-phospho-beta-D-ribosyl)imidazole-4-carboxamide + L-glutamate + H(+). Its pathway is amino-acid biosynthesis; L-histidine biosynthesis; L-histidine from 5-phospho-alpha-D-ribose 1-diphosphate: step 5/9. IGPS catalyzes the conversion of PRFAR and glutamine to IGP, AICAR and glutamate. The HisF subunit catalyzes the cyclization activity that produces IGP and AICAR from PRFAR using the ammonia provided by the HisH subunit. The chain is Imidazole glycerol phosphate synthase subunit HisF from Rhodopirellula baltica (strain DSM 10527 / NCIMB 13988 / SH1).